A 204-amino-acid polypeptide reads, in one-letter code: Large ribosomal subunit protein eL15B (204 aa).

The interval 165-185 (TATGKKSRGINKGHKFNNTKA) is disordered. Residues 169-185 (KKSRGINKGHKFNNTKA) show a composition bias toward basic residues.

It belongs to the eukaryotic ribosomal protein eL15 family. In terms of assembly, component of the large ribosomal subunit (LSU). Mature yeast ribosomes consist of a small (40S) and a large (60S) subunit. The 40S small subunit contains 1 molecule of ribosomal RNA (18S rRNA) and 33 different proteins (encoded by 57 genes). The large 60S subunit contains 3 rRNA molecules (25S, 5.8S and 5S rRNA) and 46 different proteins (encoded by 81 genes).

The protein resides in the cytoplasm. Its function is as follows. Component of the ribosome, a large ribonucleoprotein complex responsible for the synthesis of proteins in the cell. The small ribosomal subunit (SSU) binds messenger RNAs (mRNAs) and translates the encoded message by selecting cognate aminoacyl-transfer RNA (tRNA) molecules. The large subunit (LSU) contains the ribosomal catalytic site termed the peptidyl transferase center (PTC), which catalyzes the formation of peptide bonds, thereby polymerizing the amino acids delivered by tRNAs into a polypeptide chain. The nascent polypeptides leave the ribosome through a tunnel in the LSU and interact with protein factors that function in enzymatic processing, targeting, and the membrane insertion of nascent chains at the exit of the ribosomal tunnel. The chain is Large ribosomal subunit protein eL15B from Saccharomyces cerevisiae (strain ATCC 204508 / S288c) (Baker's yeast).